Consider the following 275-residue polypeptide: MTSEPSTSSEAGSSSLLDADKTNLLQEALVRAGVIRSQRQGISPTATNIKSPKKSALFEKIASHPLMPIVELLLEKCETAATTFDRKAFETDDIKRLFQSLEQRGVQLSSNRDEVDELMETAILALRTCMVELERVYSLMESFKAKYLATLRRTVCHEALVGNNGDSDDELSDNPLMPVLEMSEAAFQAQNKAMESALATLQSVSGSLSLPLQFTHQSITAAQIERNLEFLKQCGFPTQLPPNFLKPSNEKSPEKSEEEKSQKPSSSPKSPSLSD.

Residues 91-161 form the MEIS N-terminal domain; sequence TDDIKRLFQS…RRTVCHEALV (71 aa). A disordered region spans residues 239–275; sequence QLPPNFLKPSNEKSPEKSEEEKSQKPSSSPKSPSLSD. Residues 248-262 are compositionally biased toward basic and acidic residues; it reads SNEKSPEKSEEEKSQ. Low complexity predominate over residues 263-275; that stretch reads KPSSSPKSPSLSD.

As to quaternary structure, interacts with homeobox protein ceh-20; the interaction is direct, facilitates nuclear localization of ceh-20 and may stabilize interaction of a ceh-20-nob-1 complex with DNA.

Its subcellular location is the nucleus. Its function is as follows. Probable transcription coregulator. Required for asymmetric cell divisions of the T hypodermal cells, and cell fate determination, in concert with homeobox proteins nob-1 and ceh-20. Acts downstream of the Wnt signaling pathway, and of ceh-20 and nob-1. This Caenorhabditis elegans protein is Transcriptional coregulator psa-3.